A 340-amino-acid polypeptide reads, in one-letter code: MIIRFILSFFTSLLLMLIFGPHLINWLNKYKIQQIIRNFGPKSHFNKKNTPTMGGILIIFSIIISTIIWTKLSNPYVWLTLTILIGYGIIGFIDDNMKIYYKNSKGLSSLHKFSLLSILACIIIFLIYYIINDHSTIKLIVPFSKNIIFNTKMICILISYFAIIGTSNAVNLTDGLDGLAIVPIIFVTTNLSIISFISGNVNLSYYFNTIYIPYSNELTIICAAIIGSSLGFLWFNTYPAQIFMGDVGSLSLGGTIGIISVLLRQEILLIIVGGLFVIETLSVIIQVLYYKITKKKLFKMTPIHHHYELNGCPETRLIIRFWIISFILMLLGLLMLKVHQ.

10 consecutive transmembrane segments (helical) span residues 5-25, 50-70, 73-93, 113-133, 147-167, 178-198, 218-238, 242-262, 267-287, and 318-338; these read FILS…HLIN, TPTM…IIWT, SNPY…IGFI, FSLL…IIND, IIFN…IGTS, GLAI…SFIS, LTII…FNTY, IFMG…ISVL, ILLI…IIQV, and IIRF…MLKV.

Belongs to the glycosyltransferase 4 family. MraY subfamily. It depends on Mg(2+) as a cofactor.

Its subcellular location is the cell membrane. The catalysed reaction is UDP-N-acetyl-alpha-D-muramoyl-L-alanyl-gamma-D-glutamyl-meso-2,6-diaminopimeloyl-D-alanyl-D-alanine + di-trans,octa-cis-undecaprenyl phosphate = di-trans,octa-cis-undecaprenyl diphospho-N-acetyl-alpha-D-muramoyl-L-alanyl-D-glutamyl-meso-2,6-diaminopimeloyl-D-alanyl-D-alanine + UMP. It functions in the pathway cell wall biogenesis; peptidoglycan biosynthesis. Catalyzes the initial step of the lipid cycle reactions in the biosynthesis of the cell wall peptidoglycan: transfers peptidoglycan precursor phospho-MurNAc-pentapeptide from UDP-MurNAc-pentapeptide onto the lipid carrier undecaprenyl phosphate, yielding undecaprenyl-pyrophosphoryl-MurNAc-pentapeptide, known as lipid I. The polypeptide is Phospho-N-acetylmuramoyl-pentapeptide-transferase (Buchnera aphidicola subsp. Baizongia pistaciae (strain Bp)).